Consider the following 227-residue polypeptide: Cytochrome c oxidase subunit 2 (227 aa).

Topologically, residues 1-14 (MAHPFQTGLQDATS) are mitochondrial intermembrane. Residues 15 to 45 (PIMEELLHFHDHTLMIVFLISSLVLYIISIM) traverse the membrane as a helical segment. Over 46 to 59 (LTTKLTHTNTMDAQ) the chain is Mitochondrial matrix. A helical transmembrane segment spans residues 60–87 (EVETVWTILPAIILIMIALPSLRILYMM). The Mitochondrial intermembrane portion of the chain corresponds to 88–227 (DEINNPSLTV…YFEKWSASML (140 aa)). The Cu cation site is built by His-161, Cys-196, Glu-198, Cys-200, His-204, and Met-207. Position 198 (Glu-198) interacts with Mg(2+). Tyr-218 carries the post-translational modification Phosphotyrosine.

This sequence belongs to the cytochrome c oxidase subunit 2 family. In terms of assembly, component of the cytochrome c oxidase (complex IV, CIV), a multisubunit enzyme composed of 14 subunits. The complex is composed of a catalytic core of 3 subunits MT-CO1, MT-CO2 and MT-CO3, encoded in the mitochondrial DNA, and 11 supernumerary subunits COX4I, COX5A, COX5B, COX6A, COX6B, COX6C, COX7A, COX7B, COX7C, COX8 and NDUFA4, which are encoded in the nuclear genome. The complex exists as a monomer or a dimer and forms supercomplexes (SCs) in the inner mitochondrial membrane with NADH-ubiquinone oxidoreductase (complex I, CI) and ubiquinol-cytochrome c oxidoreductase (cytochrome b-c1 complex, complex III, CIII), resulting in different assemblies (supercomplex SCI(1)III(2)IV(1) and megacomplex MCI(2)III(2)IV(2)). Found in a complex with TMEM177, COA6, COX18, COX20, SCO1 and SCO2. Interacts with TMEM177 in a COX20-dependent manner. Interacts with COX20. Interacts with COX16. Cu cation serves as cofactor.

Its subcellular location is the mitochondrion inner membrane. The enzyme catalyses 4 Fe(II)-[cytochrome c] + O2 + 8 H(+)(in) = 4 Fe(III)-[cytochrome c] + 2 H2O + 4 H(+)(out). In terms of biological role, component of the cytochrome c oxidase, the last enzyme in the mitochondrial electron transport chain which drives oxidative phosphorylation. The respiratory chain contains 3 multisubunit complexes succinate dehydrogenase (complex II, CII), ubiquinol-cytochrome c oxidoreductase (cytochrome b-c1 complex, complex III, CIII) and cytochrome c oxidase (complex IV, CIV), that cooperate to transfer electrons derived from NADH and succinate to molecular oxygen, creating an electrochemical gradient over the inner membrane that drives transmembrane transport and the ATP synthase. Cytochrome c oxidase is the component of the respiratory chain that catalyzes the reduction of oxygen to water. Electrons originating from reduced cytochrome c in the intermembrane space (IMS) are transferred via the dinuclear copper A center (CU(A)) of subunit 2 and heme A of subunit 1 to the active site in subunit 1, a binuclear center (BNC) formed by heme A3 and copper B (CU(B)). The BNC reduces molecular oxygen to 2 water molecules using 4 electrons from cytochrome c in the IMS and 4 protons from the mitochondrial matrix. The sequence is that of Cytochrome c oxidase subunit 2 (MT-CO2) from Ailuropoda melanoleuca (Giant panda).